The primary structure comprises 186 residues: Interferon beta-3 (186 aa).

A signal peptide spans 1–21; that stretch reads MTYRCLLPMVLLLCFSTTALS. An intrachain disulfide couples cysteine 52 to cysteine 161. Residues asparagine 131 and asparagine 173 are each glycosylated (N-linked (GlcNAc...) asparagine).

Belongs to the alpha/beta interferon family. As to quaternary structure, monomer.

Its subcellular location is the secreted. Has antiviral, antibacterial and anticancer activities. The polypeptide is Interferon beta-3 (IFNB3) (Bos taurus (Bovine)).